A 594-amino-acid polypeptide reads, in one-letter code: Probable ABC transporter-binding protein DR_1571 (594 aa).

The signal sequence occupies residues 1–18; the sequence is MKKVMMLALALGASTSLA.

This sequence belongs to the bacterial solute-binding protein 5 family.

Probably part of a binding-protein-dependent transport system. In Deinococcus radiodurans (strain ATCC 13939 / DSM 20539 / JCM 16871 / CCUG 27074 / LMG 4051 / NBRC 15346 / NCIMB 9279 / VKM B-1422 / R1), this protein is Probable ABC transporter-binding protein DR_1571.